Here is a 305-residue protein sequence, read N- to C-terminus: Translation initiation factor eIF2B subunit alpha (305 aa).

Residue K35 is modified to N6-acetyllysine.

It belongs to the eIF-2B alpha/beta/delta subunits family. In terms of assembly, component of the translation initiation factor 2B (eIF2B) complex which is a heterodecamer of two sets of five different subunits: alpha, beta, gamma, delta and epsilon. Subunits alpha, beta and delta comprise a regulatory subcomplex and subunits epsilon and gamma comprise a catalytic subcomplex. Within the complex, the hexameric regulatory complex resides at the center, with the two heterodimeric catalytic subcomplexes bound on opposite sides.

It is found in the cytoplasm. It localises to the cytosol. Its activity is regulated as follows. Activated by the chemical integrated stress response (ISR) inhibitor ISRIB which stimulates guanine nucleotide exchange factor activity for both phosphorylated and unphosphorylated eIF2. Its function is as follows. Acts as a component of the translation initiation factor 2B (eIF2B) complex, which catalyzes the exchange of GDP for GTP on eukaryotic initiation factor 2 (eIF2) gamma subunit. Its guanine nucleotide exchange factor activity is repressed when bound to eIF2 complex phosphorylated on the alpha subunit, thereby limiting the amount of methionyl-initiator methionine tRNA available to the ribosome and consequently global translation is repressed. The sequence is that of Translation initiation factor eIF2B subunit alpha (Eif2b1) from Mus musculus (Mouse).